The primary structure comprises 211 residues: Endo-1,4-beta-xylanase 5 (211 aa).

Residues methionine 1–alanine 16 form the signal peptide. Positions alanine 19–serine 210 constitute a GH11 domain. The active-site Nucleophile is glutamate 106. Glutamate 197 acts as the Proton donor in catalysis.

This sequence belongs to the glycosyl hydrolase 11 (cellulase G) family.

It localises to the secreted. The enzyme catalyses Endohydrolysis of (1-&gt;4)-beta-D-xylosidic linkages in xylans.. It participates in glycan degradation; xylan degradation. Functionally, endo-1,4-beta-xylanase involved in the hydrolysis of xylan, a major structural heterogeneous polysaccharide found in plant biomass representing the second most abundant polysaccharide in the biosphere, after cellulose. In Aspergillus niger, this protein is Endo-1,4-beta-xylanase 5 (XYN5).